A 140-amino-acid polypeptide reads, in one-letter code: uncharacterized protein (140 aa).

Residue 18-25 coordinates ATP; sequence GTNGSGKS.

This is an uncharacterized protein from Haemophilus influenzae (strain ATCC 51907 / DSM 11121 / KW20 / Rd).